The primary structure comprises 33 residues: Photosystem II reaction center protein T (33 aa).

Residues 3–23 form a helical membrane-spanning segment; it reads ALVYTFLLVSTLGIIFFAIFF.

It belongs to the PsbT family. In terms of assembly, PSII is composed of 1 copy each of membrane proteins PsbA, PsbB, PsbC, PsbD, PsbE, PsbF, PsbH, PsbI, PsbJ, PsbK, PsbL, PsbM, PsbT, PsbY, PsbZ, Psb30/Ycf12, at least 3 peripheral proteins of the oxygen-evolving complex and a large number of cofactors. It forms dimeric complexes.

The protein resides in the plastid. Its subcellular location is the chloroplast thylakoid membrane. Its function is as follows. Found at the monomer-monomer interface of the photosystem II (PS II) dimer, plays a role in assembly and dimerization of PSII. PSII is a light-driven water plastoquinone oxidoreductase, using light energy to abstract electrons from H(2)O, generating a proton gradient subsequently used for ATP formation. In Asparagus officinalis (Garden asparagus), this protein is Photosystem II reaction center protein T.